A 112-amino-acid polypeptide reads, in one-letter code: Cytochrome c3 (112 aa).

H26, H29, C34, C37, H38, H39, C49, C54, H55, H73, C83, C86, H87, C104, C109, and H110 together coordinate heme c.

Heme is required as a cofactor.

In terms of biological role, participates in sulfate respiration coupled with phosphorylation by transferring electrons from the enzyme dehydrogenase to ferredoxin. This chain is Cytochrome c3, found in Megalodesulfovibrio gigas (strain ATCC 19364 / DSM 1382 / NCIMB 9332 / VKM B-1759) (Desulfovibrio gigas).